The chain runs to 166 residues: Flagellar protein LafL (166 aa).

A helical transmembrane segment spans residues M6–M26.

Belongs to the FliL family.

The protein resides in the cell inner membrane. Functionally, controls the rotational direction of flagella during chemotaxis. This is Flagellar protein LafL (lafL) from Vibrio parahaemolyticus serotype O3:K6 (strain RIMD 2210633).